The chain runs to 447 residues: N-succinylarginine dihydrolase (447 aa).

Substrate is bound by residues 19-28 (AGLSFGNEAS), asparagine 110, and 137-138 (HR). Glutamate 174 is a catalytic residue. A substrate-binding site is contributed by arginine 212. Residue histidine 248 is part of the active site. 2 residues coordinate substrate: aspartate 250 and asparagine 359. The active-site Nucleophile is the cysteine 365.

Belongs to the succinylarginine dihydrolase family. As to quaternary structure, homodimer.

It catalyses the reaction N(2)-succinyl-L-arginine + 2 H2O + 2 H(+) = N(2)-succinyl-L-ornithine + 2 NH4(+) + CO2. It participates in amino-acid degradation; L-arginine degradation via AST pathway; L-glutamate and succinate from L-arginine: step 2/5. In terms of biological role, catalyzes the hydrolysis of N(2)-succinylarginine into N(2)-succinylornithine, ammonia and CO(2). This chain is N-succinylarginine dihydrolase, found in Escherichia coli O17:K52:H18 (strain UMN026 / ExPEC).